Consider the following 244-residue polypeptide: Maintenance of ploidy protein mob2 (244 aa).

A disordered region spans residues 14-45 (NRSKRHQNLSDASSSSGSFSKKSSTSQLVRTG). A compositionally biased stretch (low complexity) spans 23-39 (SDASSSSGSFSKKSSTS). 2 positions are modified to phosphoserine: S46 and S48.

Belongs to the MOB1/phocein family. As to quaternary structure, interacts with orb6.

The protein localises to the cytoplasm. The protein resides in the cell cortex. Functionally, required for coordinating polarized cell growth during interphase with the onset of mitosis. The protein is Maintenance of ploidy protein mob2 (mob2) of Schizosaccharomyces pombe (strain 972 / ATCC 24843) (Fission yeast).